Here is a 162-residue protein sequence, read N- to C-terminus: uncharacterized protein (162 aa).

This is an uncharacterized protein from Acanthamoeba polyphaga (Amoeba).